A 61-amino-acid chain; its full sequence is Small ribosomal subunit protein uS14 (61 aa).

4 residues coordinate Zn(2+): cysteine 24, cysteine 27, cysteine 40, and cysteine 43.

The protein belongs to the universal ribosomal protein uS14 family. Zinc-binding uS14 subfamily. Part of the 30S ribosomal subunit. Contacts proteins S3 and S10. It depends on Zn(2+) as a cofactor.

Functionally, binds 16S rRNA, required for the assembly of 30S particles and may also be responsible for determining the conformation of the 16S rRNA at the A site. This Clostridium perfringens (strain ATCC 13124 / DSM 756 / JCM 1290 / NCIMB 6125 / NCTC 8237 / Type A) protein is Small ribosomal subunit protein uS14.